Here is a 317-residue protein sequence, read N- to C-terminus: Tetraspanin-15 (317 aa).

Residues 1 to 43 (MADNAQVVPVEEPAATATATATATATTEPEAKSSDQMESQSDN) are disordered. The Cytoplasmic portion of the chain corresponds to 1–60 (MADNAQVVPVEEPAATATATATATATTEPEAKSSDQMESQSDNKPPMGTLMALVNILAAG). A compositionally biased stretch (low complexity) spans 7–28 (VVPVEEPAATATATATATATTE). A helical transmembrane segment spans residues 61–81 (VLPIFTFVLSLTLLGYAVWLL). Residues 82-96 (YMRSYDCEDILGLPR) are Extracellular-facing. A helical transmembrane segment spans residues 97-117 (VQTLASVGLLAVFVVSNAALF). The Cytoplasmic segment spans residues 118–126 (LRRKFPMPA). Residues 127-147 (LVVMVVVLLLMLFIGLAYAGV) traverse the membrane as a helical segment. The Extracellular segment spans residues 148 to 287 (NEMQSRRFPA…IRSVRRKWWQ (140 aa)). A glycan (N-linked (GlcNAc...) asparagine) is linked at Asn-224. A helical membrane pass occupies residues 288–308 (LGIFLIVISILLLMSHLLIFL). Over 309-317 (ATFWERFKG) the chain is Cytoplasmic.

The protein belongs to the tetraspanin (TM4SF) family.

It localises to the membrane. May be involved in the regulation of cell differentiation. The sequence is that of Tetraspanin-15 (TET15) from Arabidopsis thaliana (Mouse-ear cress).